The sequence spans 39 residues: Contryphan-Cal3 (39 aa).

Positions 1-20 (MTRTAVLLLTLLFLVAMAAS) are cleaved as a signal peptide. A disulfide bond links Cys-29 and Cys-35.

In terms of tissue distribution, expressed by the venom duct.

Its subcellular location is the secreted. Functionally, probable neurotoxin. The sequence is that of Contryphan-Cal3 from Californiconus californicus (California cone).